Consider the following 65-residue polypeptide: UPF0434 protein HS_0657 (65 aa).

This sequence belongs to the UPF0434 family.

The sequence is that of UPF0434 protein HS_0657 from Histophilus somni (strain 129Pt) (Haemophilus somnus).